Here is a 365-residue protein sequence, read N- to C-terminus: tRNA(Met) cytidine acetate ligase (365 aa).

ATP contacts are provided by residues 7 to 20, glycine 96, asparagine 152, and arginine 175; that span reads IAEF…HKYL.

This sequence belongs to the TmcAL family.

It localises to the cytoplasm. It catalyses the reaction cytidine(34) in elongator tRNA(Met) + acetate + ATP = N(4)-acetylcytidine(34) in elongator tRNA(Met) + AMP + diphosphate. Its function is as follows. Catalyzes the formation of N(4)-acetylcytidine (ac(4)C) at the wobble position of elongator tRNA(Met), using acetate and ATP as substrates. First activates an acetate ion to form acetyladenylate (Ac-AMP) and then transfers the acetyl group to tRNA to form ac(4)C34. This Streptococcus pneumoniae serotype 4 (strain ATCC BAA-334 / TIGR4) protein is tRNA(Met) cytidine acetate ligase.